The primary structure comprises 130 residues: Sirohydrochlorin cobaltochelatase (130 aa).

The Proton acceptor role is filled by His12. A Co(2+)-binding site is contributed by His12. His12 provides a ligand contact to Ni(2+). Residues Glu48 and 73 to 78 (LASGVH) each bind substrate. His78 contacts Co(2+). Position 78 (His78) interacts with Ni(2+).

Belongs to the CbiX family. CbiXS subfamily. In terms of assembly, homotetramer; dimer of dimers.

It carries out the reaction Co-sirohydrochlorin + 2 H(+) = sirohydrochlorin + Co(2+). The enzyme catalyses Ni-sirohydrochlorin + 2 H(+) = sirohydrochlorin + Ni(2+). It functions in the pathway cofactor biosynthesis; adenosylcobalamin biosynthesis; cob(II)yrinate a,c-diamide from sirohydrochlorin (anaerobic route): step 1/10. In terms of biological role, catalyzes the insertion of Co(2+) into sirohydrochlorin as part of the anaerobic pathway to cobalamin biosynthesis (Potential). Involved in the biosynthesis of the unique nickel-containing tetrapyrrole coenzyme F430, the prosthetic group of methyl-coenzyme M reductase (MCR), which plays a key role in methanogenesis and anaerobic methane oxidation. Catalyzes the insertion of Ni(2+) into sirohydrochlorin to yield Ni-sirohydrochlorin. The sequence is that of Sirohydrochlorin cobaltochelatase from Methanosarcina acetivorans (strain ATCC 35395 / DSM 2834 / JCM 12185 / C2A).